The primary structure comprises 552 residues: uncharacterized protein (552 aa).

The 193-residue stretch at 8-200 (KLFADMIIQG…LLCVYEGFLK (193 aa)) folds into the DhaL domain.

This is an uncharacterized protein from Staphylococcus epidermidis (strain ATCC 12228 / FDA PCI 1200).